The chain runs to 280 residues: Phosphatidylinositol N-acetylglucosaminyltransferase GPI2 subunit (280 aa).

Residues 1-53 are Cytoplasmic-facing; it reads MTRSPWKRLLWLKQEYPDNYTDPSFIELRARQKAESNQKSDRKLSEAARAQIR. Residues 54-74 form a helical membrane-spanning segment; sequence LDFISFYQTILNTSFIYITFT. Tyrosine 75 is a topological domain (extracellular). The chain crosses the membrane as a helical span at residues 76–96; the sequence is IYYYGFDPIPPTIFLSFITLI. Residues 97–108 are Cytoplasmic-facing; it reads ISRTKVDPLLSS. A helical membrane pass occupies residues 109 to 129; it reads FMDVKSSLIITFAMLTLSPVL. Residues 130-135 lie on the Extracellular side of the membrane; the sequence is KSLSKT. Residues 136-156 traverse the membrane as a helical segment; that stretch reads TASDSIWTLSFWLTLWYIFVI. Over 157–189 the chain is Cytoplasmic; the sequence is SSTKSKDKPSNLSTNILVALVAVLSSRLSTTID. Residues 190-210 form a helical membrane-spanning segment; that stretch reads VFCFLLICIQLNIILPTYLSV. Residues 211-220 are Extracellular-facing; the sequence is TNKVVPIISN. Residues 221–241 traverse the membrane as a helical segment; that stretch reads IIVYSFLNVALGWIYMLLIFF. Over 242–280 the chain is Cytoplasmic; the sequence is ASVFYITVLPKWFIYWKINYHKRDNDLLSTWDARTPILD.

The protein belongs to the PIGC family. Component of the phosphatidylinositol N-acetylglucosaminyltransferase (GPI-GlcNAc transferase) complex composed of at least GPI1, GPI2, GPI3, GPI15, GPI19 and ERI1. Interacts with ERI1.

Its subcellular location is the membrane. It carries out the reaction a 1,2-diacyl-sn-glycero-3-phospho-(1D-myo-inositol) + UDP-N-acetyl-alpha-D-glucosamine = a 6-(N-acetyl-alpha-D-glucosaminyl)-1-(1,2-diacyl-sn-glycero-3-phospho)-1D-myo-inositol + UDP + H(+). It functions in the pathway glycolipid biosynthesis; glycosylphosphatidylinositol-anchor biosynthesis. In terms of biological role, part of the complex catalyzing the transfer of N-acetylglucosamine from UDP-N-acetylglucosamine to phosphatidylinositol, the first step of GPI biosynthesis. The sequence is that of Phosphatidylinositol N-acetylglucosaminyltransferase GPI2 subunit (GPI2) from Saccharomyces cerevisiae (strain ATCC 204508 / S288c) (Baker's yeast).